A 224-amino-acid polypeptide reads, in one-letter code: UPF0758 protein Psyr_0222 (224 aa).

One can recognise an MPN domain in the interval 102 to 224; sequence ALENPTQVRS…PLSMVERGLM (123 aa). Residues H173, H175, and D186 each coordinate Zn(2+). Residues 173-186 carry the JAMM motif motif; sequence HNHPSGITTPSRSD.

Belongs to the UPF0758 family.

The chain is UPF0758 protein Psyr_0222 from Pseudomonas syringae pv. syringae (strain B728a).